We begin with the raw amino-acid sequence, 510 residues long: MIYIIFSSIFAGFILGFLVRVFLGRLSLLDLEKNLTKVRVESQLEIENERKQIIANAKSQMLKEKNQQDRDIRDRKNEIVNLEKRLLQREETLDKRISALDKQQSRVDFKIKEFEQKEKAIREKEADLVKRLENISGLTREDARKIVIEKVEHESRRDAQVIINKSEQEAQLLADKVAKDILVSTMQRIVTEVSSEFTVASVELPNDEMKGRIIGKEGRNIRALETLIGADIIIDDTPEAVVISCFDPIRKELAKRTLERLVTDGRIHPARIEEVVYNVTNEINSIIQEEGEKVVFDLNIHGLDKRLIRGLGRLYFRSSYGQNVLSHSKETAIIGEILAKEMKLDPIVVKRACLLHDIGKGMESISENSEGHAITGAELAQSCGESEIVVNAIAAHHNEVKPESLEAIVVQIADAISASRPGARRESLNNYINRLKRLEDIAYSFEGVQKCYAIQAGREVRIIVDNVLVNDEKSILLARDIAKKIEAEMRYPGKIKVTIIRETRVIEYAR.

Residues 2–22 (IYIIFSSIFAGFILGFLVRVF) traverse the membrane as a helical segment. The region spanning 198–258 (TVASVELPND…IRKELAKRTL (61 aa)) is the KH domain. Residues 324 to 419 (VLSHSKETAI…VQIADAISAS (96 aa)) enclose the HD domain.

This sequence belongs to the RNase Y family.

It is found in the cell membrane. Functionally, endoribonuclease that initiates mRNA decay. The chain is Ribonuclease Y from Borrelia garinii subsp. bavariensis (strain ATCC BAA-2496 / DSM 23469 / PBi) (Borreliella bavariensis).